Consider the following 143-residue polypeptide: Endoribonuclease YbeY (143 aa).

Zn(2+) contacts are provided by H111, H115, and D121.

It belongs to the endoribonuclease YbeY family. It depends on Zn(2+) as a cofactor.

The protein localises to the cytoplasm. Functionally, single strand-specific metallo-endoribonuclease involved in late-stage 70S ribosome quality control and in maturation of the 3' terminus of the 16S rRNA. This chain is Endoribonuclease YbeY, found in Cytophaga hutchinsonii (strain ATCC 33406 / DSM 1761 / CIP 103989 / NBRC 15051 / NCIMB 9469 / D465).